A 74-amino-acid chain; its full sequence is ATP synthase subunit 9, mitochondrial (74 aa).

Helical transmembrane passes span 12-32 (LATIGLAGAGVGVGLVFAALI) and 50-70 (ILGFALTEAIGLFALMMAFLL).

This sequence belongs to the ATPase C chain family. F-type ATPases have 2 components, CF(1) - the catalytic core - and CF(0) - the membrane proton channel. CF(1) has five subunits: alpha(3), beta(3), gamma(1), delta(1), epsilon(1). CF(0) has three main subunits: a, b and c.

Its subcellular location is the mitochondrion membrane. Its function is as follows. Mitochondrial membrane ATP synthase (F(1)F(0) ATP synthase or Complex V) produces ATP from ADP in the presence of a proton gradient across the membrane which is generated by electron transport complexes of the respiratory chain. F-type ATPases consist of two structural domains, F(1) - containing the extramembraneous catalytic core and F(0) - containing the membrane proton channel, linked together by a central stalk and a peripheral stalk. During catalysis, ATP synthesis in the catalytic domain of F(1) is coupled via a rotary mechanism of the central stalk subunits to proton translocation. Part of the complex F(0) domain. A homomeric c-ring of probably 10 subunits is part of the complex rotary element. The sequence is that of ATP synthase subunit 9, mitochondrial from Rhizopus oryzae (Mucormycosis agent).